The following is a 605-amino-acid chain: Alpha-1,3-galactosidase A (605 aa).

The first 20 residues, 1–20 (MKKYLHILPACFLFYAAAHA), serve as a signal peptide directing secretion. PbH1 repeat units follow at residues 256–278 (SKNITLSRLQMHYMHGLGIVSQY), 312–334 (KGKVIIDSCYFAGAQDDPVNVHG), 421–443 (TPEVEIRNCYFTRTSTRGTLVTT), 444–466 (PRKVVIENNTYYKTGMSAILIEA), 477–507 (VKDVLIKGNTFIDCAYNGGPGHAVIAIHPSN), and 517–547 (HQNIRIEDNTFRTFDYPVLYAKSTAGLLFRN).

The protein belongs to the glycosyl hydrolase 110 family. A subfamily.

It catalyses the reaction Hydrolysis of terminal, non-reducing branched (1-&gt;3)-alpha-D-galactosidic residues, producing free D-galactose.. The enzyme catalyses Hydrolysis of terminal, non-reducing alpha-D-galactose residues in alpha-D-galactosides, including galactose oligosaccharides, galactomannans and galactolipids.. Alpha-galactosidase that specifically removes branched alpha-1,3-linked galactose residues present in blood group B antigens. Has no activity toward linear alpha-1,3-linked galactose residues. In Bacteroides fragilis (strain ATCC 25285 / DSM 2151 / CCUG 4856 / JCM 11019 / LMG 10263 / NCTC 9343 / Onslow / VPI 2553 / EN-2), this protein is Alpha-1,3-galactosidase A (glaA).